Here is a 382-residue protein sequence, read N- to C-terminus: p21-activated protein kinase-interacting protein 1 (382 aa).

WD repeat units follow at residues 37–77 (THHS…EHGA), 80–120 (HHAG…KTFK), 122–160 (HRGHVTFLSIHPSGKLALSVGTDKTLRTWNLIEGRSAFI), 202–240 (TNGKRISSVTFLSDSVLAVAGDEEVVRIFDCDSLECLCE), and 243–284 (AHEN…KVPP). The interval 313 to 382 (LPPAAEPCPD…MSEKKRKKKM (70 aa)) is disordered. Positions 352-363 (DSKQPTKGNSPV) are enriched in polar residues. The span at 365–382 (AKKRKMATMSEKKRKKKM) shows a compositional bias: basic residues.

Interacts with PAK1.

It localises to the nucleus. The protein resides in the nucleolus. Functionally, negatively regulates the PAK1 kinase. PAK1 is a member of the PAK kinase family, which has been shown to play a positive role in the regulation of signaling pathways involving MAPK8 and RELA. PAK1 exists as an inactive homodimer, which is activated by binding of small GTPases such as CDC42 to an N-terminal regulatory domain. PAK1IP1 also binds to the N-terminus of PAK1, and inhibits the specific activation of PAK1 by CDC42. May be involved in ribosomal large subunit assembly. The sequence is that of p21-activated protein kinase-interacting protein 1 (Pak1ip1) from Mus musculus (Mouse).